We begin with the raw amino-acid sequence, 199 residues long: Nucleoside triphosphate pyrophosphatase (199 aa).

D76 acts as the Proton acceptor in catalysis.

The protein belongs to the Maf family. Requires a divalent metal cation as cofactor.

Its subcellular location is the cytoplasm. The enzyme catalyses a ribonucleoside 5'-triphosphate + H2O = a ribonucleoside 5'-phosphate + diphosphate + H(+). It catalyses the reaction a 2'-deoxyribonucleoside 5'-triphosphate + H2O = a 2'-deoxyribonucleoside 5'-phosphate + diphosphate + H(+). Its function is as follows. Nucleoside triphosphate pyrophosphatase. May have a dual role in cell division arrest and in preventing the incorporation of modified nucleotides into cellular nucleic acids. The protein is Nucleoside triphosphate pyrophosphatase of Roseobacter denitrificans (strain ATCC 33942 / OCh 114) (Erythrobacter sp. (strain OCh 114)).